Here is a 566-residue protein sequence, read N- to C-terminus: Proline--tRNA ligase (566 aa).

This sequence belongs to the class-II aminoacyl-tRNA synthetase family. ProS type 1 subfamily. Homodimer.

Its subcellular location is the cytoplasm. It catalyses the reaction tRNA(Pro) + L-proline + ATP = L-prolyl-tRNA(Pro) + AMP + diphosphate. In terms of biological role, catalyzes the attachment of proline to tRNA(Pro) in a two-step reaction: proline is first activated by ATP to form Pro-AMP and then transferred to the acceptor end of tRNA(Pro). As ProRS can inadvertently accommodate and process non-cognate amino acids such as alanine and cysteine, to avoid such errors it has two additional distinct editing activities against alanine. One activity is designated as 'pretransfer' editing and involves the tRNA(Pro)-independent hydrolysis of activated Ala-AMP. The other activity is designated 'posttransfer' editing and involves deacylation of mischarged Ala-tRNA(Pro). The misacylated Cys-tRNA(Pro) is not edited by ProRS. The polypeptide is Proline--tRNA ligase (Staphylococcus haemolyticus (strain JCSC1435)).